Here is a 215-residue protein sequence, read N- to C-terminus: Ribonuclease T (215 aa).

The Exonuclease domain maps to 20 to 194; that stretch reads VVIDVETAGF…YDTMQTAKLF (175 aa). Mg(2+) is bound by residues D23, E25, H181, and D186. H181 acts as the Proton donor/acceptor in catalysis.

It belongs to the RNase T family. Homodimer. Requires Mg(2+) as cofactor.

Trims short 3' overhangs of a variety of RNA species, leaving a one or two nucleotide 3' overhang. Responsible for the end-turnover of tRNA: specifically removes the terminal AMP residue from uncharged tRNA (tRNA-C-C-A). Also appears to be involved in tRNA biosynthesis. This chain is Ribonuclease T, found in Yersinia enterocolitica serotype O:8 / biotype 1B (strain NCTC 13174 / 8081).